The chain runs to 236 residues: 7-cyano-7-deazaguanine synthase (236 aa).

13–23 (FSGGQDSTVCL) contributes to the ATP binding site. Cysteine 200, cysteine 215, cysteine 218, and cysteine 221 together coordinate Zn(2+).

The protein belongs to the QueC family. Zn(2+) is required as a cofactor.

It carries out the reaction 7-carboxy-7-deazaguanine + NH4(+) + ATP = 7-cyano-7-deazaguanine + ADP + phosphate + H2O + H(+). It participates in purine metabolism; 7-cyano-7-deazaguanine biosynthesis. Catalyzes the ATP-dependent conversion of 7-carboxy-7-deazaguanine (CDG) to 7-cyano-7-deazaguanine (preQ(0)). This is 7-cyano-7-deazaguanine synthase from Parvibaculum lavamentivorans (strain DS-1 / DSM 13023 / NCIMB 13966).